A 734-amino-acid polypeptide reads, in one-letter code: Elongation factor 2 (734 aa).

Residues 18–259 enclose the tr-type G domain; that stretch reads EQIRNIGITA…MVVKYVPNPR (242 aa). GTP-binding positions include 27–34, 93–97, and 147–150; these read AHVDHGKT, DTPGH, and NKID. Diphthamide is present on H600.

It belongs to the TRAFAC class translation factor GTPase superfamily. Classic translation factor GTPase family. EF-G/EF-2 subfamily.

It is found in the cytoplasm. In terms of biological role, catalyzes the GTP-dependent ribosomal translocation step during translation elongation. During this step, the ribosome changes from the pre-translocational (PRE) to the post-translocational (POST) state as the newly formed A-site-bound peptidyl-tRNA and P-site-bound deacylated tRNA move to the P and E sites, respectively. Catalyzes the coordinated movement of the two tRNA molecules, the mRNA and conformational changes in the ribosome. The protein is Elongation factor 2 (fusA) of Desulfurococcus mucosus (Desulfurococcus mobilis).